Consider the following 114-residue polypeptide: Iron-sulfur cluster insertion protein ErpA (114 aa).

3 residues coordinate iron-sulfur cluster: cysteine 42, cysteine 106, and cysteine 108.

This sequence belongs to the HesB/IscA family. Homodimer. Iron-sulfur cluster is required as a cofactor.

Its function is as follows. Required for insertion of 4Fe-4S clusters for at least IspG. This is Iron-sulfur cluster insertion protein ErpA from Salmonella typhi.